The following is a 338-amino-acid chain: Phenylalanine--tRNA ligase alpha subunit (338 aa).

Mg(2+) is bound at residue E253.

The protein belongs to the class-II aminoacyl-tRNA synthetase family. Phe-tRNA synthetase alpha subunit type 1 subfamily. Tetramer of two alpha and two beta subunits. The cofactor is Mg(2+).

Its subcellular location is the cytoplasm. The catalysed reaction is tRNA(Phe) + L-phenylalanine + ATP = L-phenylalanyl-tRNA(Phe) + AMP + diphosphate + H(+). This Pelobacter propionicus (strain DSM 2379 / NBRC 103807 / OttBd1) protein is Phenylalanine--tRNA ligase alpha subunit.